Consider the following 363-residue polypeptide: Palmitoyltransferase ZDHHC9 (363 aa).

Residues 1–35 (MSVMVVRKKVTRKWEKLPGRNTFCCDGRVMMARQK) are Cytoplasmic-facing. Residues 36-56 (GIFYLTLFLILGTCTLFFAFE) traverse the membrane as a helical segment. Topologically, residues 57–63 (CRYLAVQ) are lumenal. A helical membrane pass occupies residues 64-84 (LSPAIPVFAAMLFLFSMATLL). At 85-183 (RTSFSDPGVI…NCVGKRNYRY (99 aa)) the chain is on the cytoplasmic side. A DHHC domain is found at 139–189 (KYCYTCKIFRPPRASHCSICDNCVERFDHHCPWVGNCVGKRNYRYFYLFIL). The active-site S-palmitoyl cysteine intermediate is Cys169. The chain crosses the membrane as a helical span at residues 184–204 (FYLFILSLSLLTIYVFAFNIV). Over 205–228 (YVALKSLKIGFLETLKETPGTVLE) the chain is Lumenal. A helical membrane pass occupies residues 229-249 (VLICFFTLWSVVGLTGFHTFL). Over 250 to 363 (VALNQTTNED…PPQEVTEAEK (114 aa)) the chain is Cytoplasmic. A disordered region spans residues 303 to 363 (PLEESGSRPP…PPQEVTEAEK (61 aa)). The segment covering 310 to 322 (RPPSTQEASTSLL) has biased composition (polar residues). A compositionally biased stretch (pro residues) spans 345–355 (EMPPPEPPEPP).

It belongs to the DHHC palmitoyltransferase family. ERF2/ZDHHC9 subfamily. In terms of assembly, interacts with GOLGA7.

It localises to the endoplasmic reticulum membrane. The protein localises to the golgi apparatus membrane. The catalysed reaction is L-cysteinyl-[protein] + hexadecanoyl-CoA = S-hexadecanoyl-L-cysteinyl-[protein] + CoA. Functionally, palmitoyltransferase that catalyzes the addition of palmitate onto various protein substrates, such as ADRB2, GSDMD, HRAS, NRAS and CGAS. The ZDHHC9-GOLGA7 complex is a palmitoyltransferase specific for HRAS and NRAS. May have a palmitoyltransferase activity toward the beta-2 adrenergic receptor/ADRB2 and therefore regulate G protein-coupled receptor signaling. Acts as a regulator of innate immunity by catalyzing palmitoylation of CGAS, thereby promoting CGAS homodimerization and cyclic GMP-AMP synthase activity. Activates pyroptosis by catalyzing palmitoylation of gasdermin-D (GSDMD), thereby promoting membrane translocation and pore formation of GSDMD. The protein is Palmitoyltransferase ZDHHC9 (ZDHHC9) of Bos taurus (Bovine).